A 325-amino-acid polypeptide reads, in one-letter code: Brain mitochondrial carrier protein 1 (325 aa).

A run of 6 helical transmembrane segments spans residues Gly-38–Ala-54, Leu-112–Leu-128, Met-145–Leu-165, Gly-199–Leu-215, Val-240–Val-256, and Gly-298–Ile-315. Solcar repeat units follow at residues Lys-42 to Leu-131, Glu-139 to His-224, and Asp-233 to Leu-323.

It belongs to the mitochondrial carrier (TC 2.A.29) family. Homotetramer. Mainly expressed in brain, particularly abundant in cortex, hippocampus thalamus, amygdala and hypothalamus. Highly expressed in heart and kidney, but not liver or lung (at protein level). In the nervous system, expressed in cortex, basal ganglia, substantia nigra, cerebellum, and spinal cord (at protein level).

It localises to the mitochondrion inner membrane. The catalysed reaction is sulfite(in) + sulfate(out) = sulfite(out) + sulfate(in). The enzyme catalyses thiosulfate(in) + sulfate(out) = thiosulfate(out) + sulfate(in). It catalyses the reaction sulfate(out) + phosphate(in) = sulfate(in) + phosphate(out). It carries out the reaction oxalate(in) + sulfate(out) = oxalate(out) + sulfate(in). The catalysed reaction is malonate(in) + sulfate(out) = malonate(out) + sulfate(in). The enzyme catalyses maleate(in) + sulfate(out) = maleate(out) + sulfate(in). It catalyses the reaction (S)-malate(in) + sulfate(out) = (S)-malate(out) + sulfate(in). It carries out the reaction (3S)-citramalate(in) + sulfate(out) = (3S)-citramalate(out) + sulfate(in). The catalysed reaction is (3R)-citramalate(in) + sulfate(out) = (3R)-citramalate(out) + sulfate(in). The enzyme catalyses sulfate(out) + succinate(in) = sulfate(in) + succinate(out). It catalyses the reaction (S,S)-tartrate(in) + sulfate(out) = (S,S)-tartrate(out) + sulfate(in). It carries out the reaction (2R,3R)-tartrate(in) + sulfate(out) = (2R,3R)-tartrate(out) + sulfate(in). The catalysed reaction is D-aspartate(in) + sulfate(out) = D-aspartate(out) + sulfate(in). The enzyme catalyses L-aspartate(in) + sulfate(out) = L-aspartate(out) + sulfate(in). It catalyses the reaction sulfate(in) = sulfate(out). It carries out the reaction phosphate(in) = phosphate(out). The catalysed reaction is (S)-malate(out) = (S)-malate(in). The enzyme catalyses citrate(in) = citrate(out). It catalyses the reaction L-aspartate(out) = L-aspartate(in). It carries out the reaction L-glutamate(out) = L-glutamate(in). The catalysed reaction is H(+)(in) = H(+)(out). The enzyme catalyses chloride(in) = chloride(out). Functionally, transports inorganic anions (sulfate, sulfite, thiosulfate and phosphate) and, to a lesser extent, a variety of dicarboxylates (e.g. malonate, malate and citramalate) and, even more so, aspartate and glutamate and tricarboxylates. May catalyze the export of sulfite and thiosulfate (the hydrogen sulfide degradation products) from the mitochondria, thereby modulating the level of the hydrogen sulfide. Also can mediate a very low unidirectional transport of anions including sulfate, phosphate, (S)-malate, citrate, L-aspartate and L-glutamate. Maintains oxidative balance (through uncoupling activities) and ATP production (by modifying mitochondrial membrane potential). Is able to transport protons across lipid membranes. Also exhibits transmembrane chloride transport activity to a lesser extent. May modify mitochondrial respiratory efficiency and mitochondrial oxidant production. The polypeptide is Brain mitochondrial carrier protein 1 (Mus musculus (Mouse)).